Consider the following 206-residue polypeptide: Protein YmaB (206 aa).

This is Protein YmaB (ymaB) from Bacillus subtilis (strain 168).